An 868-amino-acid chain; its full sequence is MDSKEIRASFLNFFKSKGCTVVASSSLIPQADPTLLFTSAGMVQFKANFLGLDKSLHRAVTCQKCVRTTDIDSVGFTNRHLTFFEMLGNFSFGDYFKEQAINWAWEYLTQTLQIPAEKLYVSIYKGGIAERDNEAYNFWLKHLPKEKIFELGEKDNFWTMGPTGPCGPCSEIYYDFGDKGCKNKNCNIECDCGRFVEIWNIVFTQFDRKDDGSIVPLSQKNIDTGMGLERLVMAMQNVQSPFETDLFTPTINEAKKLLKIEGKIKEEISTLRIVSDHIRSSVFLISEGILPSNEGRGYILRRLIRRALRYGKLAGVKGPFLHLLVSVIDLHFGEIYPEIRNNKNYISSVIKTEEEAFFKTLENGEERLEDIIKKSKKTISGENAFYLYETFGFPVELTKEIALAKGLALDEESFEKAKKEAREKSRSYADEFSKEKLVVLQKIENSLKNTFVGYEQIQTKSKVLIVLNDKFEQVKELSGPGYAVLDKTPFYATGGGQMGDRGAFSWKDGQALVSTAEKPLSNIILHAVEVSGVLKEGSEIEVKIDPVNRKKTAANHTAVHLINEALRQVIGESVHQAGSFVSADVFRFDYTAPHAPTSEQLARVFEMANNAVIRAHPVNCEIRPLEDAKKLGAVTLVGEQYADPARFVMVGANFNEPSLKYSLELCGGTHVNNTSEIITVILIKEGALSAGVRRIEGVAGIAAIDYLKENTHALSAMAKTLETSLKEVPARVNSVLEDLKAAKKEIASLRQKLLTGGSGGTQVKEDVLNGKKIISMKAEGANPKELRTLADSLSQKHKDAVIVIAVDNGDRRSFVVKKAEGSNTDACTLAKGLAGKMEGSAGGKADFAQGGCKVTDWNEFLKTIKELL.

4 residues coordinate Zn(2+): His-556, His-560, Cys-666, and His-670.

This sequence belongs to the class-II aminoacyl-tRNA synthetase family. Zn(2+) serves as cofactor.

It localises to the cytoplasm. It carries out the reaction tRNA(Ala) + L-alanine + ATP = L-alanyl-tRNA(Ala) + AMP + diphosphate. Catalyzes the attachment of alanine to tRNA(Ala) in a two-step reaction: alanine is first activated by ATP to form Ala-AMP and then transferred to the acceptor end of tRNA(Ala). Also edits incorrectly charged Ser-tRNA(Ala) and Gly-tRNA(Ala) via its editing domain. The sequence is that of Alanine--tRNA ligase from Elusimicrobium minutum (strain Pei191).